We begin with the raw amino-acid sequence, 513 residues long: ATP synthase subunit alpha (513 aa).

169-176 lines the ATP pocket; sequence GDRQTGKT.

The protein belongs to the ATPase alpha/beta chains family. In terms of assembly, F-type ATPases have 2 components, CF(1) - the catalytic core - and CF(0) - the membrane proton channel. CF(1) has five subunits: alpha(3), beta(3), gamma(1), delta(1), epsilon(1). CF(0) has three main subunits: a(1), b(2) and c(9-12). The alpha and beta chains form an alternating ring which encloses part of the gamma chain. CF(1) is attached to CF(0) by a central stalk formed by the gamma and epsilon chains, while a peripheral stalk is formed by the delta and b chains.

The protein resides in the cell inner membrane. The catalysed reaction is ATP + H2O + 4 H(+)(in) = ADP + phosphate + 5 H(+)(out). Functionally, produces ATP from ADP in the presence of a proton gradient across the membrane. The alpha chain is a regulatory subunit. The sequence is that of ATP synthase subunit alpha from Mannheimia succiniciproducens (strain KCTC 0769BP / MBEL55E).